The following is a 138-amino-acid chain: Phosphoribosyl-AMP cyclohydrolase (138 aa).

Residue Asp-84 participates in Mg(2+) binding. Cys-85 serves as a coordination point for Zn(2+). 2 residues coordinate Mg(2+): Asp-86 and Asp-88. Positions 102 and 109 each coordinate Zn(2+).

It belongs to the PRA-CH family. In terms of assembly, homodimer. Requires Mg(2+) as cofactor. Zn(2+) is required as a cofactor.

It localises to the cytoplasm. It carries out the reaction 1-(5-phospho-beta-D-ribosyl)-5'-AMP + H2O = 1-(5-phospho-beta-D-ribosyl)-5-[(5-phospho-beta-D-ribosylamino)methylideneamino]imidazole-4-carboxamide. It participates in amino-acid biosynthesis; L-histidine biosynthesis; L-histidine from 5-phospho-alpha-D-ribose 1-diphosphate: step 3/9. Functionally, catalyzes the hydrolysis of the adenine ring of phosphoribosyl-AMP. The sequence is that of Phosphoribosyl-AMP cyclohydrolase from Burkholderia cenocepacia (strain ATCC BAA-245 / DSM 16553 / LMG 16656 / NCTC 13227 / J2315 / CF5610) (Burkholderia cepacia (strain J2315)).